Consider the following 314-residue polypeptide: Serine acetyltransferase 1, chloroplastic (314 aa).

Belongs to the transferase hexapeptide repeat family. As to quaternary structure, homomultimer. Interacts with OASA1 and CYP20-3. Component of the cysteine synthase complex (CSC) composed of two OAS-TL dimers and one SAT hexamer. Mostly expressed in leaves. Localized in cortex, trichomes and vascular tissues, particularly in phloem.

It localises to the plastid. Its subcellular location is the chloroplast. The protein resides in the cytoplasm. The catalysed reaction is L-serine + acetyl-CoA = O-acetyl-L-serine + CoA. The protein operates within amino-acid biosynthesis; L-cysteine biosynthesis; L-cysteine from L-serine: step 1/2. Functionally, serine acetyltransferase which catalyzes the formation of O-acetyl-L-serine from acetyl-CoA and L-serine. Also displays O-acetylserine (thio1)-lyase activity in vitro. May be involved in detoxification process by mediating the production of glutathione. This chain is Serine acetyltransferase 1, chloroplastic (SAT1), found in Arabidopsis thaliana (Mouse-ear cress).